A 252-amino-acid chain; its full sequence is Phosphomannomutase (252 aa).

Residue aspartate 13 is the Nucleophile of the active site. Mg(2+)-binding residues include aspartate 13 and aspartate 15. Aspartate 15 (proton donor/acceptor) is an active-site residue. Alpha-D-mannose 1-phosphate is bound by residues arginine 22, arginine 124, arginine 135, arginine 142, serine 180, and aspartate 182. Residues aspartate 208, tyrosine 220, and threonine 225 each coordinate Mg(2+).

This sequence belongs to the eukaryotic PMM family. In terms of assembly, homodimer. Mg(2+) serves as cofactor. In terms of tissue distribution, expressed in roots, leaves, stems and flowers.

It is found in the cytoplasm. The catalysed reaction is alpha-D-mannose 1-phosphate = D-mannose 6-phosphate. It functions in the pathway nucleotide-sugar biosynthesis; GDP-alpha-D-mannose biosynthesis; alpha-D-mannose 1-phosphate from D-fructose 6-phosphate: step 2/2. In terms of biological role, catalyzes the interconversion of mannose-6-phosphate to mannose-1-phosphate, the precursor for the synthesis of GDP-mannose. GDP-mannose is an essential sugar nucleotide for the synthesis of D-mannose-containing cell wall polysaccharides (galactomannans and glucomannans), glycolipids, glycoproteins and the antioxidant L-ascorbate. Involved in the biosynthesis of ascorbate and polysaccharides in response to abiotic stress during seed germination. The polypeptide is Phosphomannomutase (Dendrobium officinale (Orchid)).